The following is a 108-amino-acid chain: Ig kappa chain V-V region HP R16.7 (108 aa).

The tract at residues 1–23 (DIQMTQTTSSLSASLGDRVTISC) is framework-1. Cys23 and Cys88 are disulfide-bonded. The segment at 24-34 (RASQDISNYLN) is complementarity-determining-1. The tract at residues 35 to 49 (WYQQKPDGTVKLLIY) is framework-2. The complementarity-determining-2 stretch occupies residues 50–56 (YTSRLHS). A framework-3 region spans residues 57 to 88 (GVPSRFSGSGSGTDYSLTISNLEQEDIATYFC). Residues 89–97 (QQGNSLPRT) form a complementarity-determining-3 region. A framework-4 region spans residues 98–108 (FGGGTKLEIKR).

The chain is Ig kappa chain V-V region HP R16.7 from Mus musculus (Mouse).